We begin with the raw amino-acid sequence, 1046 residues long: Hemoglobin-haptoglobin-binding protein A (1046 aa).

Positions 1-24 (MTNFRLNLLAYSVMLGLTAGVAYA) are cleaved as a signal peptide. 4 tandem repeats follow at residues 26–29 (QPTN), 30–33 (QPTN), 34–37 (QPTN), and 38–41 (QPTN). Residues 26–41 (QPTNQPTNQPTNQPTN) form a 4 X 4 AA tandem repeats of Q-P-T-N region. Positions 51-58 (EQINVLGS) match the TonB box motif. One can recognise a TBDR plug domain in the interval 61-188 (HNDNTPPKIA…LGGSVSFDTK (128 aa)). The region spanning 196–1046 (NKNYYASYKR…NYRMSVQFEF (851 aa)) is the TBDR beta-barrel domain. Residues 1029 to 1046 (NRFYAPGRNYRMSVQFEF) carry the TonB C-terminal box motif.

Belongs to the TonB-dependent receptor family. Hemoglobin/haptoglobin binding protein subfamily.

The protein localises to the cell outer membrane. Its function is as follows. Acts as a receptor for the hemoglobin/haptoglobin complex of the human host and is required for heme uptake. Does not bind hemoglobin alone. This chain is Hemoglobin-haptoglobin-binding protein A (hhuA), found in Haemophilus influenzae.